The following is a 139-amino-acid chain: Putative pre-16S rRNA nuclease (139 aa).

It belongs to the YqgF nuclease family.

Its subcellular location is the cytoplasm. Its function is as follows. Could be a nuclease involved in processing of the 5'-end of pre-16S rRNA. This Haemophilus influenzae (strain PittEE) protein is Putative pre-16S rRNA nuclease.